The sequence spans 450 residues: Ribosomal protein uS12 methylthiotransferase RimO (450 aa).

The MTTase N-terminal domain occupies 16-126 (PRISFVSLGC…VLDAVHQAVP (111 aa)). [4Fe-4S] cluster is bound by residues C25, C61, C90, C157, C161, and C164. Residues 143-380 (LTPRHYAYLK…MLKQQAISAR (238 aa)) enclose the Radical SAM core domain. Residues 383-449 (KRKVGTRQQV…AYDLIGSAVG (67 aa)) enclose the TRAM domain.

It belongs to the methylthiotransferase family. RimO subfamily. [4Fe-4S] cluster serves as cofactor.

The protein resides in the cytoplasm. The catalysed reaction is L-aspartate(89)-[ribosomal protein uS12]-hydrogen + (sulfur carrier)-SH + AH2 + 2 S-adenosyl-L-methionine = 3-methylsulfanyl-L-aspartate(89)-[ribosomal protein uS12]-hydrogen + (sulfur carrier)-H + 5'-deoxyadenosine + L-methionine + A + S-adenosyl-L-homocysteine + 2 H(+). Catalyzes the methylthiolation of an aspartic acid residue of ribosomal protein uS12. The polypeptide is Ribosomal protein uS12 methylthiotransferase RimO (Azorhizobium caulinodans (strain ATCC 43989 / DSM 5975 / JCM 20966 / LMG 6465 / NBRC 14845 / NCIMB 13405 / ORS 571)).